The following is a 505-amino-acid chain: Calcium/calmodulin-dependent protein kinase kinase 1 (505 aa).

A disordered region spans residues 28 to 66 (LEEADEGPEPARNGVDPPPRARAASVIPGSASRPTPVRP). Ser-67 and Ser-74 each carry phosphoserine. Position 78 is an asymmetric dimethylarginine (Arg-78). Positions 84–105 (LGAQVGPYSTGPASHISPRSWR) are disordered. Phosphoserine is present on Ser-100. A Phosphothreonine modification is found at Thr-108. The region spanning 128-409 (YKLQSEIGKG…VSDIKLHPWV (282 aa)) is the Protein kinase domain. ATP contacts are provided by residues 134-142 (IGKGAYGVV) and Lys-157. The tract at residues 167 to 189 (QYGFPRRPPPRGSQATQGGPAKQ) is RP domain. The active-site Proton acceptor is Asp-275. Residues 435–440 (KNSVRL) form an autoinhibitory domain region. Positions 438-463 (VRLIPSWTTVILVKSMLRKRSFGNPF) are calmodulin-binding. 3 positions are modified to phosphoserine: Ser-458, Ser-475, and Ser-492. Positions 460-505 (GNPFEPQARREERSMSAPGSLLMKEGCGEGCKSPELPGVQEDEAAS) are disordered.

The protein belongs to the protein kinase superfamily. Ser/Thr protein kinase family. In terms of assembly, interacts with CAMK4 and calmodulin. Post-translationally, appears to be autophosphorylated in a Ca(2+)/calmodulin-dependent manner. Phosphorylated at multiple sites by PRCAKA/PKA. Phosphorylation of Ser-458 is blocked upon binding to Ca(2+)/calmodulin. In vitro, phosphorylated by CAMK1 and CAMK4. In terms of tissue distribution, widely expressed. Differentially expressed in various brain regions.

It is found in the cytoplasm. The protein localises to the nucleus. The catalysed reaction is L-seryl-[protein] + ATP = O-phospho-L-seryl-[protein] + ADP + H(+). It catalyses the reaction L-threonyl-[protein] + ATP = O-phospho-L-threonyl-[protein] + ADP + H(+). Its activity is regulated as follows. Activated by Ca(2+)/calmodulin. Binding of calmodulin may relieve intrasteric autoinhibition. Partially inhibited upon phosphorylation by PRCAKA/PKA. May be regulated through phosphorylation by CAMK1 and CAMK4. Its function is as follows. Calcium/calmodulin-dependent protein kinase that belongs to a proposed calcium-triggered signaling cascade involved in a number of cellular processes. Phosphorylates CAMK1, CAMK1D, CAMK1G and CAMK4. Involved in regulating cell apoptosis. Promotes cell survival by phosphorylating AKT1/PKB that inhibits pro-apoptotic BAD/Bcl2-antagonist of cell death. The polypeptide is Calcium/calmodulin-dependent protein kinase kinase 1 (Camkk1) (Mus musculus (Mouse)).